A 479-amino-acid polypeptide reads, in one-letter code: Ammonium transporter Rh type C (479 aa).

Topologically, residues 1-9 are cytoplasmic; sequence MAWNTNLRW. The chain crosses the membrane as a helical span at residues 10-30; it reads RLPLTCLLLQVAMVILFGVFV. The Extracellular segment spans residues 31 to 60; the sequence is RYDFDADAHWWTERKHKNLSEVENEFYYRY. The N-linked (GlcNAc...) asparagine glycan is linked to asparagine 48. A helical transmembrane segment spans residues 61 to 81; that stretch reads PSFQDVHVMVFVGFGFLMTFL. Residues 82 to 85 lie on the Cytoplasmic side of the membrane; the sequence is QRYG. The helical transmembrane segment at 86–106 threads the bilayer; that stretch reads FSAVGFNFLLAAFGIQWALLM. Over 107–123 the chain is Extracellular; sequence QGWFHFLEGRYIVVGVE. Residues 124–144 form a helical membrane-spanning segment; the sequence is NLINADFCVASVCVAFGAVLG. At 145-148 the chain is on the cytoplasmic side; it reads KVSP. A helical membrane pass occupies residues 149-169; it reads IQLLIMTFFQVTLFAVNEFIL. Residues 170-177 lie on the Extracellular side of the membrane; sequence LNLLKVKD. The chain crosses the membrane as a helical span at residues 178–200; that stretch reads AGGSMTIHTFYAYFELTVTRILY. Over 201-218 the chain is Cytoplasmic; it reads RRNLEQSKERQSSAYQSD. The chain crosses the membrane as a helical span at residues 219–239; the sequence is LFAMIGTLFLWMYWPSFNSAI. Over 240-250 the chain is Extracellular; sequence SYHGDSQHRAA. The helical transmembrane segment at 251-271 threads the bilayer; the sequence is INTYCSLAACVLTSVAVSSAL. Over 272 to 281 the chain is Cytoplasmic; the sequence is HKKGKLDMVH. The chain crosses the membrane as a helical span at residues 282–302; the sequence is IQNATLAGGVAVGTTAEMMLM. Position 303 (proline 303) is a topological domain, extracellular. A helical transmembrane segment spans residues 304–324; that stretch reads YGALIIGFICGIISTLGFVYL. At 325 to 345 the chain is on the cytoplasmic side; it reads TPFLESRLHIQDTCGINNLHG. Residues 346–366 form a helical membrane-spanning segment; it reads IPGIIGGIVGAVTAASASLEV. The Extracellular portion of the chain corresponds to 367–394; sequence YGKEGLVHSFDFQDFKRDWTARTQGKFQ. Residues 395–415 traverse the membrane as a helical segment; that stretch reads IYGLLVTLAMALMGGIIVGLI. Over 416 to 479 the chain is Cytoplasmic; it reads LRLPFWGQPS…PMASSVPLVP (64 aa).

It belongs to the ammonium transporter (TC 2.A.49) family. Rh subfamily. In terms of assembly, homotrimer. N-glycosylated.

The protein resides in the apical cell membrane. The catalysed reaction is NH4(+)(in) = NH4(+)(out). It carries out the reaction methylamine(out) = methylamine(in). The enzyme catalyses CO2(out) = CO2(in). Ammonium transporter involved in the maintenance of acid-base homeostasis. Transports ammonium and its related derivative methylammonium across the plasma membrane of epithelial cells likely contributing to renal transepithelial ammonia transport and ammonia metabolism. Postulated to primarily mediate an electroneutral bidirectional transport of NH3 ammonia species according to a mechanism that implies interaction of an NH4(+) ion with acidic residues of the pore entry followed by dissociation of NH4(+) into NH3 and H(+). As a result NH3 transits through the central pore and is protonated on the extracellular side reforming NH4(+). May act as a CO2 channel providing for renal acid secretion. This Macaca mulatta (Rhesus macaque) protein is Ammonium transporter Rh type C (RHCG).